The following is a 363-amino-acid chain: Alanine racemase (363 aa).

The active-site Proton acceptor; specific for D-alanine is K39. At K39 the chain carries N6-(pyridoxal phosphate)lysine. Residue R134 coordinates substrate. The active-site Proton acceptor; specific for L-alanine is Y251. Position 299 (M299) interacts with substrate.

It belongs to the alanine racemase family. The cofactor is pyridoxal 5'-phosphate.

It carries out the reaction L-alanine = D-alanine. It participates in amino-acid biosynthesis; D-alanine biosynthesis; D-alanine from L-alanine: step 1/1. In terms of biological role, catalyzes the interconversion of L-alanine and D-alanine. May also act on other amino acids. The protein is Alanine racemase (alr) of Thermodesulfovibrio yellowstonii (strain ATCC 51303 / DSM 11347 / YP87).